Here is a 263-residue protein sequence, read N- to C-terminus: TPR repeat-containing protein DDB_G0285095 (263 aa).

Positions 1 to 25 (MGCCGSKEKYNGEDVPKSQRLENRP) are enriched in basic and acidic residues. Residues 1–62 (MGCCGSKEKY…ASASQQNNPT (62 aa)) are disordered. 3 TPR repeats span residues 87–120 (SDLL…DTDN), 121–154 (SRAW…AAPK), and 162–195 (SSLL…GARS).

This is TPR repeat-containing protein DDB_G0285095 from Dictyostelium discoideum (Social amoeba).